A 417-amino-acid chain; its full sequence is Phosphoribosylamine--glycine ligase (417 aa).

The ATP-grasp domain occupies 107–313 (KQIMAKYEIP…FLEIIEATLE (207 aa)). 133–194 (LKETWYPVVI…EEMLYGKEAS (62 aa)) serves as a coordination point for ATP. Mg(2+) is bound by residues Glu283 and Asn285.

The protein belongs to the GARS family. Mg(2+) serves as cofactor. The cofactor is Mn(2+).

It carries out the reaction 5-phospho-beta-D-ribosylamine + glycine + ATP = N(1)-(5-phospho-beta-D-ribosyl)glycinamide + ADP + phosphate + H(+). The protein operates within purine metabolism; IMP biosynthesis via de novo pathway; N(1)-(5-phospho-D-ribosyl)glycinamide from 5-phospho-alpha-D-ribose 1-diphosphate: step 2/2. In Caldanaerobacter subterraneus subsp. tengcongensis (strain DSM 15242 / JCM 11007 / NBRC 100824 / MB4) (Thermoanaerobacter tengcongensis), this protein is Phosphoribosylamine--glycine ligase.